A 190-amino-acid polypeptide reads, in one-letter code: Large ribosomal subunit protein uL5 (190 aa).

The protein belongs to the universal ribosomal protein uL5 family. As to quaternary structure, part of the 50S ribosomal subunit; part of the 5S rRNA/L5/L18/L25 subcomplex. Contacts the 5S rRNA and the P site tRNA. Forms a bridge to the 30S subunit in the 70S ribosome.

Functionally, this is one of the proteins that bind and probably mediate the attachment of the 5S RNA into the large ribosomal subunit, where it forms part of the central protuberance. In the 70S ribosome it contacts protein S13 of the 30S subunit (bridge B1b), connecting the 2 subunits; this bridge is implicated in subunit movement. Contacts the P site tRNA; the 5S rRNA and some of its associated proteins might help stabilize positioning of ribosome-bound tRNAs. The polypeptide is Large ribosomal subunit protein uL5 (Blochmanniella floridana).